A 719-amino-acid chain; its full sequence is Probable phosphatidylinositol phosphate kinase DDB_G0267588 (719 aa).

Residues 47-261 (VFSPIPPPPS…SDSPNRVRLN (215 aa)) form a disordered region. 2 stretches are compositionally biased toward low complexity: residues 57 to 77 (TTDN…TDNT) and 87 to 104 (IENN…PNSI). The segment covering 107–129 (ANKKDSIELEEDKEHSIKRKDGS) has biased composition (basic and acidic residues). Residues 172 to 184 (FDATNDNHNPQEV) show a composition bias toward polar residues. A compositionally biased stretch (low complexity) spans 199 to 217 (TTTTTTTTTTTTSTNSTSN). 2 stretches are compositionally biased toward polar residues: residues 218–228 (KLPNNGDNTVS) and 248–261 (ASGS…VRLN). Thr262 bears the Phosphothreonine mark. One can recognise a PIPK domain in the interval 316–718 (NAVGKSMGTE…RFQEFLSTII (403 aa)). The segment at 579–638 (RENEPPSPSLLRSTLEDSSDFESPSMEQSSAGQQQQQRGSGNYDNSGAGRDSTTGGAAPK) is disordered. Residues 606–619 (QSSAGQQQQQRGSG) are compositionally biased toward low complexity.

Phosphorylated at Thr-262 by pkgB.

In terms of biological role, may be involved in signaling events that underlie chemotaxis via the chemoattractant-mediated pkgB phosphorylation. This is Probable phosphatidylinositol phosphate kinase DDB_G0267588 from Dictyostelium discoideum (Social amoeba).